The chain runs to 532 residues: Phosphate-import permease protein PhnE (532 aa).

The interval 1-20 (MTTEITRPPAPPSRPSESRK) is disordered. The next 12 membrane-spanning stretches (helical) occupy residues 23–45 (LPGL…AWAI), 85–107 (LLMA…FLAA), 134–156 (LFAV…ALAL), 187–209 (GYFR…AMFV), 216–235 (LRMS…FALQ), 245–267 (RALG…AIAI), 287–304 (FGLS…FVLL), 345–367 (VAIG…ILAA), 395–417 (LAVV…LAIG), 452–471 (LFAA…SLYL), 478–495 (TSTI…YLLF), and 505–527 (VAGA…SGWI). The 184-residue stretch at 81–264 (AVETLLMAVL…VIIAGMELLA (184 aa)) folds into the ABC transmembrane type-1 1 domain. The ABC transmembrane type-1 2 domain occupies 341-524 (AAQTVAIGVV…VIVYAIERLS (184 aa)).

Belongs to the binding-protein-dependent transport system permease family. As to quaternary structure, the complex is composed of two ATP-binding proteins (PhnC), two transmembrane proteins (PhnE) and a solute-binding protein (PhnD).

Its subcellular location is the cell membrane. Part of the ABC transporter complex PhnCDE involved in phosphate import. Responsible for the translocation of the substrate across the membrane. This Mycolicibacterium smegmatis (strain ATCC 700084 / mc(2)155) (Mycobacterium smegmatis) protein is Phosphate-import permease protein PhnE (phnE).